A 141-amino-acid polypeptide reads, in one-letter code: Nucleoside diphosphate kinase (141 aa).

K11, F59, R87, T93, R104, and N114 together coordinate ATP. Catalysis depends on H117, which acts as the Pros-phosphohistidine intermediate.

The protein belongs to the NDK family. As to quaternary structure, homotetramer. The cofactor is Mg(2+).

The protein resides in the cytoplasm. It catalyses the reaction a 2'-deoxyribonucleoside 5'-diphosphate + ATP = a 2'-deoxyribonucleoside 5'-triphosphate + ADP. It carries out the reaction a ribonucleoside 5'-diphosphate + ATP = a ribonucleoside 5'-triphosphate + ADP. Major role in the synthesis of nucleoside triphosphates other than ATP. The ATP gamma phosphate is transferred to the NDP beta phosphate via a ping-pong mechanism, using a phosphorylated active-site intermediate. In Paraburkholderia phytofirmans (strain DSM 17436 / LMG 22146 / PsJN) (Burkholderia phytofirmans), this protein is Nucleoside diphosphate kinase.